The following is a 129-amino-acid chain: uncharacterized protein (129 aa).

Residues 8–24 (YLILFITIIAICSLFRI) traverse the membrane as a helical segment.

Its subcellular location is the membrane. This is an uncharacterized protein from Rickettsia prowazekii (strain Madrid E).